The following is a 653-amino-acid chain: Eukaryotic translation initiation factor 4E-binding protein Mextli (653 aa).

The 66-residue stretch at 227-292 folds into the KH domain; sequence YCKDEVVIRN…DKINYAKQLM (66 aa). Disordered stretches follow at residues 311–335 and 515–570; these read VGGS…TPTG and EGDD…AGTN. Composition is skewed to low complexity over residues 314-323 and 525-536; these read SCSSLNSSNS and SNGGSSTSNQNG. A compositionally biased stretch (basic and acidic residues) spans 546-563; the sequence is SRKESTPETKGAREKGDL.

Interacts with eukaryotic translation initiation factor eIF4E1. Also interacts with eukaryotic translation initiation factor 3 complex members eif3-S9/eif3b, Int6/eif3e and eIF-3p40/eif3h and with CG3225.

The protein localises to the cytoplasm. Its subcellular location is the cytoplasmic ribonucleoprotein granule. Plays a role in promoting translation. The polypeptide is Eukaryotic translation initiation factor 4E-binding protein Mextli (Drosophila melanogaster (Fruit fly)).